A 291-amino-acid polypeptide reads, in one-letter code: ATP synthase gamma chain (291 aa).

Belongs to the ATPase gamma chain family. As to quaternary structure, F-type ATPases have 2 components, CF(1) - the catalytic core - and CF(0) - the membrane proton channel. CF(1) has five subunits: alpha(3), beta(3), gamma(1), delta(1), epsilon(1). CF(0) has three main subunits: a, b and c.

The protein localises to the cell inner membrane. Its function is as follows. Produces ATP from ADP in the presence of a proton gradient across the membrane. The gamma chain is believed to be important in regulating ATPase activity and the flow of protons through the CF(0) complex. This is ATP synthase gamma chain from Cupriavidus necator (strain ATCC 17699 / DSM 428 / KCTC 22496 / NCIMB 10442 / H16 / Stanier 337) (Ralstonia eutropha).